Here is a 742-residue protein sequence, read N- to C-terminus: Mechanosensitive ion channel protein 9 (742 aa).

The tract at residues 1 to 117 (MAERRVSNGE…REENGGRSLR (117 aa)) is disordered. Basic and acidic residues predominate over residues 17 to 26 (SDKEDSKDPR). A phosphoserine mark is found at serine 28 and serine 36. A compositionally biased stretch (basic and acidic residues) spans 105 to 117 (DSTREENGGRSLR). Serine 142 and serine 145 each carry phosphoserine. 6 consecutive transmembrane segments (helical) span residues 180–200 (AFLE…SLTI), 221–241 (MVTL…VFII), 261–281 (NVQV…LFDG), 292–312 (FLDF…LFLV), 524–544 (LITG…LDIA), and 559–579 (LAFM…FVFV).

This sequence belongs to the MscS (TC 1.A.23) family. As to expression, detected in the epidermis, cortex, and endodermis of the root tip.

Its subcellular location is the cell membrane. Its function is as follows. Mechanosensitive channel that opens in response to stretch forces in the membrane lipid bilayer. The chain is Mechanosensitive ion channel protein 9 (MSL9) from Arabidopsis thaliana (Mouse-ear cress).